The sequence spans 193 residues: Peptidyl-tRNA hydrolase (193 aa).

Tyr16 contacts tRNA. Residue His21 is the Proton acceptor of the active site. Phe67, Asn69, and Asn115 together coordinate tRNA.

Belongs to the PTH family. Monomer.

It localises to the cytoplasm. The catalysed reaction is an N-acyl-L-alpha-aminoacyl-tRNA + H2O = an N-acyl-L-amino acid + a tRNA + H(+). Functionally, hydrolyzes ribosome-free peptidyl-tRNAs (with 1 or more amino acids incorporated), which drop off the ribosome during protein synthesis, or as a result of ribosome stalling. Its function is as follows. Catalyzes the release of premature peptidyl moieties from peptidyl-tRNA molecules trapped in stalled 50S ribosomal subunits, and thus maintains levels of free tRNAs and 50S ribosomes. This is Peptidyl-tRNA hydrolase from Psychrobacter arcticus (strain DSM 17307 / VKM B-2377 / 273-4).